The chain runs to 398 residues: Phosphoglycerate kinase (398 aa).

Residues 21 to 23, Arg-36, 59 to 62, Arg-119, and Arg-157 contribute to the substrate site; these read DFN and HLGR. Residues Lys-208, Gly-296, Glu-327, and 354 to 357 contribute to the ATP site; that span reads GGDS.

It belongs to the phosphoglycerate kinase family. As to quaternary structure, monomer.

The protein resides in the cytoplasm. It catalyses the reaction (2R)-3-phosphoglycerate + ATP = (2R)-3-phospho-glyceroyl phosphate + ADP. It functions in the pathway carbohydrate degradation; glycolysis; pyruvate from D-glyceraldehyde 3-phosphate: step 2/5. The chain is Phosphoglycerate kinase from Streptococcus pyogenes serotype M5 (strain Manfredo).